A 424-amino-acid polypeptide reads, in one-letter code: Double-stranded RNA-binding protein 8 (424 aa).

Positions 1 to 10 are enriched in pro residues; that stretch reads MDMPPTPLPP. Residues 1-22 are disordered; that stretch reads MDMPPTPLPPETANTSPAPNGA. DRBM domains are found at residues 33 to 102 and 118 to 185; these read VFKS…EIVK and LCKN…AIQG. Basic and acidic residues-rich tracts occupy residues 287-308 and 318-328; these read KRVE…ENQH and DEARVEQEPSR. The interval 287-330 is disordered; sequence KRVEAEPPRDIEMVQPDKENQHSDAALVQPDDEARVEQEPSRDI.

Functionally, binds double-stranded RNA. In Oryza sativa subsp. japonica (Rice), this protein is Double-stranded RNA-binding protein 8 (DRB8).